Here is a 404-residue protein sequence, read N- to C-terminus: Zinc finger TRAF-type-containing protein 1 (404 aa).

Residues 1–13 show a composition bias toward gly residues; it reads MSGAEEAGGGGPA. The disordered stretch occupies residues 1-22; that stretch reads MSGAEEAGGGGPAAGPAGSVPA. An RING-type; degenerate zinc finger spans residues 111-156; it reads CTVCLDLPKASVYQCTNGHLMCAGCFIHLLADARLKEEQATCPNCR. The TRAF-type zinc finger occupies 152 to 225; sequence CPNCRCEISK…PWHGPFHELT (74 aa).

The protein belongs to the ZFTRAF1 family. Interacts with LGALS3.

Its subcellular location is the cytoplasm. The protein resides in the perinuclear region. The protein is Zinc finger TRAF-type-containing protein 1 of Homo sapiens (Human).